Consider the following 295-residue polypeptide: Sulfotransferase 1E1 (295 aa).

48 to 53 (KSGTTW) contributes to the 3'-phosphoadenylyl sulfate binding site. 106–108 (KSH) is a substrate binding site. The active-site Proton acceptor is the His-108. Positions 130, 138, and 193 each coordinate 3'-phosphoadenylyl sulfate. Phosphoserine; by PKA occurs at positions 216 and 228. 3'-phosphoadenylyl sulfate contacts are provided by residues 227–232 (TSFQEM) and 257–259 (RKG).

Belongs to the sulfotransferase 1 family. As to quaternary structure, homodimer.

The protein localises to the cytoplasm. It is found in the cytosol. The catalysed reaction is estrone + 3'-phosphoadenylyl sulfate = estrone 3-sulfate + adenosine 3',5'-bisphosphate + H(+). The enzyme catalyses (24S)-hydroxycholesterol + 3'-phosphoadenylyl sulfate = (24S)-hydroxycholesterol 3-sulfate + adenosine 3',5'-bisphosphate + H(+). It catalyses the reaction 17beta-estradiol + 3'-phosphoadenylyl sulfate = 17beta-estradiol 3-sulfate + adenosine 3',5'-bisphosphate + H(+). It carries out the reaction 3beta-hydroxyandrost-5-en-17-one + 3'-phosphoadenylyl sulfate = dehydroepiandrosterone 3-sulfate + adenosine 3',5'-bisphosphate + H(+). The catalysed reaction is 4-ethylphenol + 3'-phosphoadenylyl sulfate = 4-ethylphenyl sulfate + adenosine 3',5'-bisphosphate + H(+). With respect to regulation, inhibited by estradiol. Functionally, sulfotransferase that utilizes 3'-phospho-5'-adenylyl sulfate (PAPS) as sulfonate donor to catalyze the sulfate conjugation of estradiol and estrone. Is a key enzyme in estrogen homeostasis, the sulfation of estrogens leads to their inactivation. Also sulfates dehydroepiandrosterone (DHEA), pregnenolone, (24S)-hydroxycholesterol and xenobiotic compounds like ethinylestradiol, equalenin, diethyl stilbesterol and 1-naphthol at significantly lower efficiency. Does not sulfonate cortisol, testosterone and dopamine. May play a role in gut microbiota-host metabolic interaction. O-sulfonates 4-ethylphenol (4-EP), a dietary tyrosine-derived metabolite produced by gut bacteria. The product 4-EPS crosses the blood-brain barrier and may negatively regulate oligodendrocyte maturation and myelination, affecting the functional connectivity of different brain regions associated with the limbic system. This chain is Sulfotransferase 1E1 (SULT1E1), found in Bos taurus (Bovine).